The sequence spans 300 residues: Diphthine methyl ester synthase (300 aa).

S-adenosyl-L-methionine contacts are provided by residues Leu-9, Asp-85, Gly-88, Ser-113–Val-114, and Leu-164. Ser-172 is modified (phosphoserine). 2 residues coordinate S-adenosyl-L-methionine: Leu-222 and His-247. Ser-298 is subject to Phosphoserine.

The protein belongs to the diphthine synthase family.

The protein resides in the cytoplasm. The catalysed reaction is 2-[(3S)-amino-3-carboxypropyl]-L-histidyl-[translation elongation factor 2] + 4 S-adenosyl-L-methionine = diphthine methyl ester-[translation elongation factor 2] + 4 S-adenosyl-L-homocysteine + 3 H(+). The protein operates within protein modification; peptidyl-diphthamide biosynthesis. Functionally, S-adenosyl-L-methionine-dependent methyltransferase that catalyzes four methylations of the modified target histidine residue in translation elongation factor 2 (EF-2), to form an intermediate called diphthine methyl ester. The four successive methylation reactions represent the second step of diphthamide biosynthesis. This chain is Diphthine methyl ester synthase (DPH5), found in Saccharomyces cerevisiae (strain ATCC 204508 / S288c) (Baker's yeast).